Here is a 417-residue protein sequence, read N- to C-terminus: RH-like protein (417 aa).

11 helical membrane passes run 12–32 (CLPL…FFFT), 44–64 (LVAS…GLGF), 77–97 (VAFN…LDGF), 125–145 (ISMN…MELV), 172–192 (IHVF…KPLP), 203–223 (TSPS…WPTF), 238–258 (VFST…VSSL), 265–285 (INMT…SASC), 287–307 (VIHS…ISIG), 331–351 (TFGL…ALRV), and 358–378 (MIGF…AMSI).

It belongs to the ammonium transporter (TC 2.A.49) family. Rh subfamily.

Its subcellular location is the membrane. In terms of biological role, may be part of an oligomeric complex which is likely to have a transport or channel function in the erythrocyte membrane. In Macaca mulatta (Rhesus macaque), this protein is RH-like protein.